Here is a 533-residue protein sequence, read N- to C-terminus: Kelch-like protein 33 (533 aa).

Kelch repeat units follow at residues 210 to 258 (ALVV…ALPA), 273 to 322 (ELYV…ALDG), 323 to 369 (KLYA…ILEG), 371 to 418 (LYVS…ALGG), 419 to 465 (RLYV…VLQG), and 467 to 514 (LLVL…ILTL).

The chain is Kelch-like protein 33 (KLHL33) from Homo sapiens (Human).